The primary structure comprises 289 residues: MAIAKEFLLTVLNYIANGVVNVQSSTTQAVTTLAPYQIIAIMKNNNVTVSRTTITSISVSDVVNASQEETLTIRYSGTDASPFTYTTDEIEIWASTQSALLYKIADIQLQTPLSKTEHDYLNIEYEIIITAGASYTTTSSMSQYTSVVTFRTLVAPILYFFALFLVPAWSTVLKQNPTFPQSQLSNYISPSSYQGINAMYVGSNQVTIVSKLVGFGTTTVSIVVNGEVTSTQVNAPIFIGVTTPSGVLVLAYNYYSGTISKYVSLTVTTTYGSATVINQFETKTTGGTT.

Topologically, residues 1–152 (MAIAKEFLLT…QYTSVVTFRT (152 aa)) are extracellular. A helical membrane pass occupies residues 153–173 (LVAPILYFFALFLVPAWSTVL). Topologically, residues 174-234 (KQNPTFPQSQ…NGEVTSTQVN (61 aa)) are cytoplasmic. A helical transmembrane segment spans residues 235–255 (APIFIGVTTPSGVLVLAYNYY). Over 256–289 (SGTISKYVSLTVTTTYGSATVINQFETKTTGGTT) the chain is Extracellular.

It is found in the host membrane. This is Putative transmembrane protein ORF289 from Acidianus sp. F28 (AFV-2).